Consider the following 389-residue polypeptide: DNA replication and repair protein RecF (389 aa).

Residue 30 to 37 (GPNGFGKT) participates in ATP binding.

This sequence belongs to the RecF family.

It localises to the cytoplasm. The RecF protein is involved in DNA metabolism; it is required for DNA replication and normal SOS inducibility. RecF binds preferentially to single-stranded, linear DNA. It also seems to bind ATP. This is DNA replication and repair protein RecF from Mycolicibacterium gilvum (strain PYR-GCK) (Mycobacterium gilvum (strain PYR-GCK)).